Consider the following 698-residue polypeptide: Polyribonucleotide nucleotidyltransferase (698 aa).

Asp490 and Asp496 together coordinate Mg(2+). The KH domain occupies 557-616 (PKVVTMTIKPDKIRDVIGPGGKKINEIIDETGVKLDIEQDGTIFIGAVDQAMINRAREII). The S1 motif domain occupies 626–694 (GQTYQATVKR…KQGRVNASHR (69 aa)).

It belongs to the polyribonucleotide nucleotidyltransferase family. Requires Mg(2+) as cofactor.

The protein localises to the cytoplasm. The catalysed reaction is RNA(n+1) + phosphate = RNA(n) + a ribonucleoside 5'-diphosphate. Functionally, involved in mRNA degradation. Catalyzes the phosphorolysis of single-stranded polyribonucleotides processively in the 3'- to 5'-direction. The polypeptide is Polyribonucleotide nucleotidyltransferase (Staphylococcus aureus (strain MRSA252)).